Consider the following 343-residue polypeptide: Uroporphyrinogen decarboxylase (343 aa).

Substrate-binding positions include 21–25, aspartate 71, tyrosine 148, serine 203, and histidine 316; that span reads RQAGR.

The protein belongs to the uroporphyrinogen decarboxylase family. In terms of assembly, homodimer.

The protein localises to the cytoplasm. It carries out the reaction uroporphyrinogen III + 4 H(+) = coproporphyrinogen III + 4 CO2. It functions in the pathway porphyrin-containing compound metabolism; protoporphyrin-IX biosynthesis; coproporphyrinogen-III from 5-aminolevulinate: step 4/4. In terms of biological role, catalyzes the decarboxylation of four acetate groups of uroporphyrinogen-III to yield coproporphyrinogen-III. The sequence is that of Uroporphyrinogen decarboxylase from Campylobacter fetus subsp. fetus (strain 82-40).